Reading from the N-terminus, the 319-residue chain is Ninja-family protein Os07g0602900 (319 aa).

Disordered regions lie at residues 1 to 26 (MAAS…EKGG), 69 to 152 (LPGG…DAMY), and 181 to 234 (AEAM…LTMR). Gly residues predominate over residues 70–79 (PGGGGGGAGG). Over residues 105 to 118 (ERWRRREMQSLKRL) the composition is skewed to basic and acidic residues. The span at 185 to 196 (DTSSSDNASCQN) shows a compositional bias: polar residues. The span at 225–234 (LRTLRSLTMR) shows a compositional bias: low complexity.

The protein belongs to the Ninja family.

The protein localises to the nucleus. The polypeptide is Ninja-family protein Os07g0602900 (Oryza sativa subsp. japonica (Rice)).